Here is a 629-residue protein sequence, read N- to C-terminus: tRNA uridine 5-carboxymethylaminomethyl modification enzyme MnmG (629 aa).

Residue 11-16 (GGGHAG) participates in FAD binding. Residue 273–287 (GPRYCPSFEDKVVRF) coordinates NAD(+).

Belongs to the MnmG family. As to quaternary structure, homodimer. Heterotetramer of two MnmE and two MnmG subunits. The cofactor is FAD.

It is found in the cytoplasm. Its function is as follows. NAD-binding protein involved in the addition of a carboxymethylaminomethyl (cmnm) group at the wobble position (U34) of certain tRNAs, forming tRNA-cmnm(5)s(2)U34. In Mycoplasma capricolum subsp. capricolum (strain California kid / ATCC 27343 / NCTC 10154), this protein is tRNA uridine 5-carboxymethylaminomethyl modification enzyme MnmG.